Consider the following 130-residue polypeptide: MSVTQYYGTGRRKTSTARVFIKAGSGVITVNDRPLDEYFGRPVARMVVRQPLELVDLVEKFDVNVTVSGGGSFGQAGAIRHGLTRALMEYDENLRSELRKAGYVTRDSREVERKKVGLRKARKRPQYSKR.

The interval 108-130 (SREVERKKVGLRKARKRPQYSKR) is disordered. Residues 116–130 (VGLRKARKRPQYSKR) are compositionally biased toward basic residues.

The protein belongs to the universal ribosomal protein uS9 family.

This Cellvibrio japonicus (strain Ueda107) (Pseudomonas fluorescens subsp. cellulosa) protein is Small ribosomal subunit protein uS9.